Here is a 138-residue protein sequence, read N- to C-terminus: rRNA methyltransferase 1, mitochondrial (138 aa).

Residues 1–21 (MNNQPCSIVWRRFLTSKVKPA) constitute a mitochondrion transit peptide. The tract at residues 92-113 (KQDILSSKRQQEEHKSKYSRKS) is disordered.

The protein belongs to the class IV-like SAM-binding methyltransferase superfamily. RNA methyltransferase TrmH family.

The protein resides in the mitochondrion. It catalyses the reaction a guanosine in 21S rRNA + S-adenosyl-L-methionine = a 2'-O-methylguanosine in 21S rRNA + S-adenosyl-L-homocysteine + H(+). S-adenosyl-L-methionine-dependent 2'-O-ribose methyltransferase that catalyzes the formation of the 2'-O-methylguanosine corresponding to position 2270 in S.cerevisiae 21S mitochondrial large ribosomal RNA, a universally conserved modification in the peptidyl transferase domain of the 21S rRNA. The chain is rRNA methyltransferase 1, mitochondrial from Lachancea kluyveri (strain ATCC 58438 / CBS 3082 / BCRC 21498 / NBRC 1685 / JCM 7257 / NCYC 543 / NRRL Y-12651) (Yeast).